The chain runs to 221 residues: Endonuclease V (221 aa).

Positions 44 and 112 each coordinate Mg(2+).

This sequence belongs to the endonuclease V family. Mg(2+) serves as cofactor.

It localises to the cytoplasm. The enzyme catalyses Endonucleolytic cleavage at apurinic or apyrimidinic sites to products with a 5'-phosphate.. In terms of biological role, DNA repair enzyme involved in the repair of deaminated bases. Selectively cleaves double-stranded DNA at the second phosphodiester bond 3' to a deoxyinosine leaving behind the intact lesion on the nicked DNA. In Nostoc punctiforme (strain ATCC 29133 / PCC 73102), this protein is Endonuclease V.